The sequence spans 127 residues: Class I hydrophobin 1 (127 aa).

The first 20 residues, 1–20 (MLSLLSKAVSLAILVTAVVA), serve as a signal peptide directing secretion. 4 disulfide bridges follow: cysteine 53–cysteine 108, cysteine 60–cysteine 102, cysteine 61–cysteine 94, and cysteine 109–cysteine 122. N-linked (GlcNAc...) asparagine glycosylation occurs at asparagine 66.

This sequence belongs to the fungal hydrophobin family. Self-assembles to form functional amyloid fibrils called rodlets. Self-assembly into fibrillar rodlets occurs spontaneously at hydrophobic:hydrophilic interfaces and the rodlets further associate laterally to form amphipathic monolayers. As to expression, expressed everywhere in the mycelial tissues of developing fruiting bodies except for the top parts of the pileus (cap) and for the prehymenophore; but high level of the transcript is detected in the parts surrounding the prehymenophore.

The protein localises to the secreted. Its subcellular location is the cell wall. In terms of biological role, aerial growth, conidiation, and dispersal of filamentous fungi in the environment rely upon a capability of their secreting small amphipathic proteins called hydrophobins (HPBs) with low sequence identity. Class I can self-assemble into an outermost layer of rodlet bundles on aerial cell surfaces, conferring cellular hydrophobicity that supports fungal growth, development and dispersal; whereas Class II form highly ordered films at water-air interfaces through intermolecular interactions but contribute nothing to the rodlet structure. Hyd1 is a class I hydrophobin that plays a role in fruiting body initiation rather than in mature fruit body maintenance. Seems to be involved in the formation in the extracellular matrix of lined air channels with a hydrophobic membrane. These channels may help to provide gas exchange during respiration in mycelial tissues of developing fruiting bodies and are formed all over the mycelial tissues of these developing fruiting bodies except for the top parts of the pileus (cap) and for the prehymenophore. The chain is Class I hydrophobin 1 from Lentinula edodes (Shiitake mushroom).